We begin with the raw amino-acid sequence, 874 residues long: Alanine--tRNA ligase (874 aa).

Zn(2+) contacts are provided by His-564, His-568, Cys-665, and His-669.

It belongs to the class-II aminoacyl-tRNA synthetase family. Zn(2+) serves as cofactor.

Its subcellular location is the cytoplasm. The catalysed reaction is tRNA(Ala) + L-alanine + ATP = L-alanyl-tRNA(Ala) + AMP + diphosphate. Catalyzes the attachment of alanine to tRNA(Ala) in a two-step reaction: alanine is first activated by ATP to form Ala-AMP and then transferred to the acceptor end of tRNA(Ala). Also edits incorrectly charged Ser-tRNA(Ala) and Gly-tRNA(Ala) via its editing domain. This is Alanine--tRNA ligase from Burkholderia pseudomallei (strain 668).